The chain runs to 187 residues: Probable nicotinate-nucleotide adenylyltransferase (187 aa).

The protein belongs to the NadD family.

The catalysed reaction is nicotinate beta-D-ribonucleotide + ATP + H(+) = deamido-NAD(+) + diphosphate. It functions in the pathway cofactor biosynthesis; NAD(+) biosynthesis; deamido-NAD(+) from nicotinate D-ribonucleotide: step 1/1. Catalyzes the reversible adenylation of nicotinate mononucleotide (NaMN) to nicotinic acid adenine dinucleotide (NaAD). This is Probable nicotinate-nucleotide adenylyltransferase from Agrobacterium fabrum (strain C58 / ATCC 33970) (Agrobacterium tumefaciens (strain C58)).